The chain runs to 62 residues: Potassium channel toxin alpha-KTx 18.3 (62 aa).

Residues 1 to 26 (MHFSGVAFILISMVLIGSIFETTVEA) form the signal peptide. 3 disulfide bridges follow: Cys34-Cys53, Cys39-Cys58, and Cys43-Cys60.

This sequence belongs to the short scorpion toxin superfamily. Potassium channel inhibitor family. Alpha-KTx 18 subfamily. As to expression, expressed by the venom gland.

It localises to the secreted. Functionally, probable voltage-gated potassium channel inhibitor. This Tityus discrepans (Venezuelan scorpion) protein is Potassium channel toxin alpha-KTx 18.3.